A 406-amino-acid chain; its full sequence is Exo-alpha-sialidase (406 aa).

The first 20 residues, 1-20 (MQSMRFMILALLVQFLPAWA), serve as a signal peptide directing secretion. Residues Arg59, Arg78, Asp84, and Gln148 each contribute to the substrate site. Asn235 is a glycosylation site (N-linked (GlcNAc...) asparagine). Substrate is bound by residues Arg265, Arg322, 322 to 323 (RR), 331 to 332 (YD), Lys337, Tyr358, Asp376, and 376 to 378 (DFF). Asn396 is a glycosylation site (N-linked (GlcNAc...) asparagine).

Belongs to the glycosyl hydrolase 33 family.

The catalysed reaction is Hydrolysis of alpha-(2-&gt;3)-, alpha-(2-&gt;6)-, alpha-(2-&gt;8)- glycosidic linkages of terminal sialic acid residues in oligosaccharides, glycoproteins, glycolipids, colominic acid and synthetic substrates.. Functionally, sialidase is able to release sialic acid from a wide variety of natural substrates including bovine salivary mucin, colominic acid, bovine fetuin, a serum glycoprotein containing both alpha-2-6 and alpha-2-3-linkages in a ratio of about 3:2, and glycoproteins and glycolipids from thermally denatured human lung epithelial cells. Does not show any trans-sialidase activity since it is able to remove terminal sialic acid residues but is unable to catalyze their transfer to the acceptor substrate. 2-keto-3-deoxynononic acid (KDN) is the preferred substrate and A.fumigatus can utilize KDN as a sole carbon source. The polypeptide is Exo-alpha-sialidase (Aspergillus fumigatus (strain ATCC MYA-4609 / CBS 101355 / FGSC A1100 / Af293) (Neosartorya fumigata)).